Reading from the N-terminus, the 125-residue chain is Small ribosomal subunit protein eS8 (125 aa).

It belongs to the eukaryotic ribosomal protein eS8 family. As to quaternary structure, part of the 30S ribosomal subunit.

The polypeptide is Small ribosomal subunit protein eS8 (Methanosarcina acetivorans (strain ATCC 35395 / DSM 2834 / JCM 12185 / C2A)).